The sequence spans 156 residues: V-type sodium ATPase subunit K (156 aa).

The next 4 helical transmembrane spans lie at 11 to 31 (GMVFAVLAMATATIFSGIGSA), 60 to 80 (LLPGTQGLYGFVIAFLIFINL), 89 to 109 (GLNFLGASLPIAFTGLFSGIA), and 132 to 152 (IIFAAMVETYAILGFVISFLL).

Belongs to the V-ATPase proteolipid subunit family. Post-translationally, the N-terminus is blocked.

It localises to the cell membrane. Functionally, involved in ATP-driven sodium extrusion. The chain is V-type sodium ATPase subunit K (ntpK) from Enterococcus hirae (strain ATCC 9790 / DSM 20160 / JCM 8729 / LMG 6399 / NBRC 3181 / NCIMB 6459 / NCDO 1258 / NCTC 12367 / WDCM 00089 / R).